The primary structure comprises 90 residues: MSATLNVLRWSALGAGVVYGFVHNRTLYSQAEKKVADAKFKKQEKLIEQAKAEWARLHPAPVASTGVVTDISDDKFDIEAYLNHAFPEKA.

Ser2 carries the N-acetylserine modification. A helical transmembrane segment spans residues 7 to 23 (VLRWSALGAGVVYGFVH).

F-type ATP synthases have 2 components, the catalytic core F(1) and the membrane-embedded component F(0), linked together by a central stalk and a peripheral stalk. The central stalk, also called rotor shaft, is often seen as part of F(1). The peripheral stalk is seen as part of F(0). F(0) contains the membrane channel next to the rotor. F-type ATP synthases form dimers but each monomer functions independently in ATP generation. The dimer consists of 17 different polypeptides: ATP1 (subunit alpha, 3 molecules per monomer, part of F(1)), ATP2 (subunit beta, 3 copies per monomer, part of F(1)), ATP3 (subunit gamma, part of the central stalk), ATP4 (subunit b, part of the peripheral stalk), ATP5/OSCP (subunit 5/OSCP, part of the peripheral stalk), ATP6 (subunit a, part of the peripheral stalk), ATP7 (subunit d, part of the peripheral stalk), ATP8 (subunit 8, part of the peripheral stalk), OLI1 (subunit c, part of the rotor, 10 molecules per monomer), ATP14 (subunit h, part of the peripheral stalk), ATP15 (subunit epsilon, part of the central stalk), ATP16 (subunit delta, part of the central stalk), ATP17 (subunit f, part of the peripheral stalk), ATP18 (subunit i/j, part of the peripheral stalk), ATP19 (subunit k, dimer-specific, at interface between monomers), ATP20 (subunit g, at interface between monomers), TIM11 (subunit e, at interface between monomers).

It is found in the mitochondrion inner membrane. Its function is as follows. Mitochondrial membrane ATP synthase (F(1)F(0) ATP synthase or Complex V) produces ATP from ADP in the presence of a proton gradient across the membrane which is generated by electron transport complexes of the respiratory chain. F-type ATP synthases consist of two structural domains, F(1) - containing the extramembraneous catalytic core, and F(0) - containing the membrane proton channel, linked together by a central stalk and a peripheral stalk. During catalysis, ATP synthesis in the catalytic domain of F(1) is coupled via a rotary mechanism of the central stalk subunits to proton translocation. Part of the complex F(0) domain. Minor subunit located with subunit a/ATP6 in the membrane. Together with subunit g/ATP20, probably contributes to membrane curvature at the site of the ATP synthase dimer, ultimately contributing to formation of cristae. This Yarrowia lipolytica (strain CLIB 122 / E 150) (Yeast) protein is ATP synthase subunit e, mitochondrial.